A 165-amino-acid polypeptide reads, in one-letter code: S-(2-succino)cysteine N-acetyltransferase (165 aa).

The region spanning 3–162 (PRYRLAVERD…ITVYMKKQLR (160 aa)) is the N-acetyltransferase domain.

It belongs to the acetyltransferase family.

It catalyses the reaction S-(2-succino)-L-cysteine + acetyl-CoA = N-acetyl-S-(2-succino)-L-cysteine + CoA + H(+). Its pathway is amino-acid biosynthesis; L-cysteine biosynthesis. Functionally, catalyzes the N-acetylation of S-(2-succino)cysteine. Is involved in a S-(2-succino)cysteine (2SC) degradation pathway that allows B.subtilis to grow on 2SC as a sole sulfur source, via its metabolization to cysteine. Moreover, 2SC is a toxic compound in B.subtilis at high exogenous concentrations, and this enzyme relieves 2SC toxicity via N-acetylation. This Bacillus subtilis (strain 168) protein is S-(2-succino)cysteine N-acetyltransferase.